We begin with the raw amino-acid sequence, 354 residues long: MAELKNDRYLRALLKQPVDRTPVWMMRQAGRYLPEYKATRAEAGDFMSLCKNQDLACEVTLQPLRRYDLDAAILFSDILTVPDAMGLGLYFEAGEGPRFERPTDTIDSIKKLCIPDPEDELGYVMRAVSTIRRELKGEVPLIGFSGSPWTLATYMVEGGSSKAFEKIKKMAYEEPATLHMLLDKLADSVTLYLNAQVANGAQSLMIFDSWGGALSHHAYREFSLRYMQKIVDGLTRHADGRQVPVTLFTKGGGLWLESMAETGCDALGLDWTVDIGDARRRVGHKVALQGNMDPSVLYGTPERIHQEVDQILASYGEGTGHVFNLGHGIHQHVDPERAGSFINSVHELSPQYHK.

Substrate contacts are provided by residues R27–R31, D77, Y154, S209, and H327.

The protein belongs to the uroporphyrinogen decarboxylase family. As to quaternary structure, homodimer.

Its subcellular location is the cytoplasm. The catalysed reaction is uroporphyrinogen III + 4 H(+) = coproporphyrinogen III + 4 CO2. Its pathway is porphyrin-containing compound metabolism; protoporphyrin-IX biosynthesis; coproporphyrinogen-III from 5-aminolevulinate: step 4/4. Catalyzes the decarboxylation of four acetate groups of uroporphyrinogen-III to yield coproporphyrinogen-III. This chain is Uroporphyrinogen decarboxylase, found in Shewanella pealeana (strain ATCC 700345 / ANG-SQ1).